A 397-amino-acid chain; its full sequence is Flavohemoprotein (397 aa).

Positions 4-140 (SFSPHTITLI…IANLLKDREA (137 aa)) constitute a Globin domain. Residue H87 coordinates heme b. Residues Y97 and E139 each act as charge relay system in the active site. The tract at residues 151-397 (GGWIHWRRFV…FGPMDEEMAA (247 aa)) is reductase. The FAD-binding FR-type domain maps to 154–258 (IHWRRFVISK…TPPVGDFFLP (105 aa)). FAD contacts are provided by residues Y192 and 207–210 (RNYS). 271–276 (GVGLTP) lines the NADP(+) pocket. FAD is bound at residue 387–390 (FFGP).

Belongs to the globin family. Two-domain flavohemoproteins subfamily. This sequence in the C-terminal section; belongs to the flavoprotein pyridine nucleotide cytochrome reductase family. Heme b serves as cofactor. FAD is required as a cofactor.

It carries out the reaction 2 nitric oxide + NADPH + 2 O2 = 2 nitrate + NADP(+) + H(+). The catalysed reaction is 2 nitric oxide + NADH + 2 O2 = 2 nitrate + NAD(+) + H(+). In terms of biological role, is involved in NO detoxification in an aerobic process, termed nitric oxide dioxygenase (NOD) reaction that utilizes O(2) and NAD(P)H to convert NO to nitrate, which protects the bacterium from various noxious nitrogen compounds. Therefore, plays a central role in the inducible response to nitrosative stress. The sequence is that of Flavohemoprotein from Xylella fastidiosa (strain Temecula1 / ATCC 700964).